The chain runs to 271 residues: Tryptophan synthase alpha chain (271 aa).

Catalysis depends on proton acceptor residues Glu-49 and Asp-60.

Belongs to the TrpA family. In terms of assembly, tetramer of two alpha and two beta chains.

The enzyme catalyses (1S,2R)-1-C-(indol-3-yl)glycerol 3-phosphate + L-serine = D-glyceraldehyde 3-phosphate + L-tryptophan + H2O. The protein operates within amino-acid biosynthesis; L-tryptophan biosynthesis; L-tryptophan from chorismate: step 5/5. Functionally, the alpha subunit is responsible for the aldol cleavage of indoleglycerol phosphate to indole and glyceraldehyde 3-phosphate. This chain is Tryptophan synthase alpha chain, found in Burkholderia lata (strain ATCC 17760 / DSM 23089 / LMG 22485 / NCIMB 9086 / R18194 / 383).